An 874-amino-acid polypeptide reads, in one-letter code: Alanine--tRNA ligase (874 aa).

Residues H562, H566, C663, and H667 each contribute to the Zn(2+) site.

The protein belongs to the class-II aminoacyl-tRNA synthetase family. Zn(2+) serves as cofactor.

The protein localises to the cytoplasm. It carries out the reaction tRNA(Ala) + L-alanine + ATP = L-alanyl-tRNA(Ala) + AMP + diphosphate. Its function is as follows. Catalyzes the attachment of alanine to tRNA(Ala) in a two-step reaction: alanine is first activated by ATP to form Ala-AMP and then transferred to the acceptor end of tRNA(Ala). Also edits incorrectly charged Ser-tRNA(Ala) and Gly-tRNA(Ala) via its editing domain. The chain is Alanine--tRNA ligase from Bordetella pertussis (strain Tohama I / ATCC BAA-589 / NCTC 13251).